Here is a 135-residue protein sequence, read N- to C-terminus: ATP synthase epsilon chain 1 (135 aa).

This sequence belongs to the ATPase epsilon chain family. In terms of assembly, F-type ATPases have 2 components, CF(1) - the catalytic core - and CF(0) - the membrane proton channel. CF(1) has five subunits: alpha(3), beta(3), gamma(1), delta(1), epsilon(1). CF(0) has three main subunits: a, b and c.

It is found in the cell inner membrane. Functionally, produces ATP from ADP in the presence of a proton gradient across the membrane. The polypeptide is ATP synthase epsilon chain 1 (Nitrobacter hamburgensis (strain DSM 10229 / NCIMB 13809 / X14)).